A 124-amino-acid polypeptide reads, in one-letter code: UPF0102 protein Meso_4010 (124 aa).

It belongs to the UPF0102 family.

This Chelativorans sp. (strain BNC1) protein is UPF0102 protein Meso_4010.